The following is a 598-amino-acid chain: Pantothenate kinase 1 (598 aa).

Positions 32 to 161 (ARPGDQGKAG…SPGAPVGTSA (130 aa)) are disordered. Residues 38 to 49 (GKAGGGSPGWGC) are compositionally biased toward gly residues. Ser-215 is modified (phosphoserine). The Nucleolar localization signal signature appears at 218–235 (KKCRLRRRMDSGRKNRPP). Residue Glu-363 is the Proton acceptor of the active site. Ser-417, Ser-420, and Arg-432 together coordinate acetyl-CoA.

The protein belongs to the type II pantothenate kinase family. Homodimer. Expressed at high levels in brain, heart, kidney, liver, skeletal muscle and testis. In terms of tissue distribution, detected at much lower levels in kidney, liver, brain and testis and not detected in heart or skeletal muscle.

Its subcellular location is the cytoplasm. It is found in the nucleus. The protein localises to the nucleolus. It localises to the cytosol. The protein resides in the cytoplasmic vesicle. Its subcellular location is the clathrin-coated vesicle. It is found in the recycling endosome. It carries out the reaction (R)-pantothenate + ATP = (R)-4'-phosphopantothenate + ADP + H(+). It participates in cofactor biosynthesis; coenzyme A biosynthesis; CoA from (R)-pantothenate: step 1/5. With respect to regulation, regulated by feedback inhibition by CoA and its thioesters. Catalyzes the phosphorylation of pantothenate to generate 4'-phosphopantothenate in the first and rate-determining step of coenzyme A (CoA) synthesis. The sequence is that of Pantothenate kinase 1 (PANK1) from Homo sapiens (Human).